Consider the following 49-residue polypeptide: Disintegrin echistatin-gamma (49 aa).

A Disintegrin domain is found at 1-47; the sequence is DCASGPCCRDCKFLEEGTICNMARGDDMDDYCNGKTCDCPRNPHKWP. Cystine bridges form between cysteine 2–cysteine 11, cysteine 7–cysteine 32, cysteine 8–cysteine 37, and cysteine 20–cysteine 39. Residues 24-26 carry the Cell attachment site motif; that stretch reads RGD.

The protein belongs to the venom metalloproteinase (M12B) family. P-II subfamily. P-IIa sub-subfamily. Monomer. In terms of tissue distribution, expressed by the venom gland.

It localises to the secreted. Functionally, has antiplatelet activities on guinea pig, followed by human, rabbit and rat platelet-rich plasma. The protein is Disintegrin echistatin-gamma of Echis pyramidum leakeyi (Leakey's carpet viper).